A 117-amino-acid chain; its full sequence is Large ribosomal subunit protein uL18 (117 aa).

The protein belongs to the universal ribosomal protein uL18 family. As to quaternary structure, part of the 50S ribosomal subunit; part of the 5S rRNA/L5/L18/L25 subcomplex. Contacts the 5S and 23S rRNAs.

In terms of biological role, this is one of the proteins that bind and probably mediate the attachment of the 5S RNA into the large ribosomal subunit, where it forms part of the central protuberance. This chain is Large ribosomal subunit protein uL18, found in Thioalkalivibrio sulfidiphilus (strain HL-EbGR7).